A 127-amino-acid polypeptide reads, in one-letter code: Ribonuclease P protein component (127 aa).

Belongs to the RnpA family. In terms of assembly, consists of a catalytic RNA component (M1 or rnpB) and a protein subunit.

It catalyses the reaction Endonucleolytic cleavage of RNA, removing 5'-extranucleotides from tRNA precursor.. In terms of biological role, RNaseP catalyzes the removal of the 5'-leader sequence from pre-tRNA to produce the mature 5'-terminus. It can also cleave other RNA substrates such as 4.5S RNA. The protein component plays an auxiliary but essential role in vivo by binding to the 5'-leader sequence and broadening the substrate specificity of the ribozyme. The chain is Ribonuclease P protein component from Rippkaea orientalis (strain PCC 8801 / RF-1) (Cyanothece sp. (strain PCC 8801)).